Here is an 858-residue protein sequence, read N- to C-terminus: DNA mismatch repair protein MutS (858 aa).

600–607 (GPNMSGKS) provides a ligand contact to ATP.

Belongs to the DNA mismatch repair MutS family.

Functionally, this protein is involved in the repair of mismatches in DNA. It is possible that it carries out the mismatch recognition step. This protein has a weak ATPase activity. The protein is DNA mismatch repair protein MutS of Bacillus pumilus (strain SAFR-032).